The sequence spans 300 residues: 17-beta-hydroxysteroid dehydrogenase 13 (300 aa).

Positions 1–19 (MNIILEILLLLITIIYSYL) are cleaved as a signal peptide. At S33 the chain carries Phosphoserine. 40 to 67 (LITGAGHGIGRQTTYEFAKRQSILVLWD) lines the NAD(+) pocket. S172 is a binding site for substrate. The Proton acceptor role is filled by Y185. K189 lines the NAD(+) pocket.

This sequence belongs to the short-chain dehydrogenases/reductases (SDR) family. As to expression, highly expressed in the liver. Also detected in ovary, bone marrow, kidney, brain, lung, skeletal muscle, bladder and testis.

It localises to the lipid droplet. Its subcellular location is the endoplasmic reticulum. The protein localises to the cytoplasm. The enzyme catalyses 17beta-estradiol + NAD(+) = estrone + NADH + H(+). It carries out the reaction all-trans-retinol + NAD(+) = all-trans-retinal + NADH + H(+). The catalysed reaction is all-trans-retinal + NAD(+) + H2O = all-trans-retinoate + NADH + 2 H(+). Functionally, plays a pivotal role in hepatic lipid metabolism. In vitro, it catalyzes the oxidation of a variety of lipid substrates, including 17beta-estradiol, retinol, retinal, and leukotriene B4. In terms of biological role, has retinol/retinal dehydrogenase activity in vitro. Does not have retinol/retinal dehydrogenase activity in vitro. The chain is 17-beta-hydroxysteroid dehydrogenase 13 from Homo sapiens (Human).